We begin with the raw amino-acid sequence, 434 residues long: Na(+)/H(+) antiporter NhaA 1 (434 aa).

A run of 11 helical transmembrane segments spans residues 34-54, 73-93, 111-131, 141-161, 171-191, 194-214, 233-253, 278-298, 313-333, 346-366, and 380-400; these read GLLL…PWSA, LTLG…VAGL, ALPV…YVLW, GWAI…AVIS, FLLT…ALFY, ELHL…ALLV, VLVH…GFAV, SAGL…VGGF, VVTG…WLLA, WVDV…SLLI, and HVKV…TGVL.

Belongs to the NhaA Na(+)/H(+) (TC 2.A.33) antiporter family.

The protein localises to the cell membrane. It carries out the reaction Na(+)(in) + 2 H(+)(out) = Na(+)(out) + 2 H(+)(in). Its function is as follows. Na(+)/H(+) antiporter that extrudes sodium in exchange for external protons. The sequence is that of Na(+)/H(+) antiporter NhaA 1 from Nocardioides sp. (strain ATCC BAA-499 / JS614).